The following is a 118-amino-acid chain: Large ribosomal subunit protein bL20 (118 aa).

This sequence belongs to the bacterial ribosomal protein bL20 family.

In terms of biological role, binds directly to 23S ribosomal RNA and is necessary for the in vitro assembly process of the 50S ribosomal subunit. It is not involved in the protein synthesizing functions of that subunit. In Rhodopirellula baltica (strain DSM 10527 / NCIMB 13988 / SH1), this protein is Large ribosomal subunit protein bL20.